The sequence spans 565 residues: Arginine--tRNA ligase (565 aa).

The short motif at 128–138 is the 'HIGH' region element; the sequence is ANPTGPLHVGH.

Belongs to the class-I aminoacyl-tRNA synthetase family. As to quaternary structure, monomer.

The protein localises to the cytoplasm. The enzyme catalyses tRNA(Arg) + L-arginine + ATP = L-arginyl-tRNA(Arg) + AMP + diphosphate. In Delftia acidovorans (strain DSM 14801 / SPH-1), this protein is Arginine--tRNA ligase.